We begin with the raw amino-acid sequence, 225 residues long: ATP-dependent dethiobiotin synthetase BioD (225 aa).

13–18 (NVGKTL) is an ATP binding site. Thr-17 contributes to the Mg(2+) binding site. Lys-38 is an active-site residue. Thr-42 serves as a coordination point for substrate. ATP-binding positions include Asp-55, 116-119 (EGAG), 176-177 (NH), and 205-207 (PWL). Mg(2+) is bound by residues Asp-55 and Glu-116.

It belongs to the dethiobiotin synthetase family. In terms of assembly, homodimer. Requires Mg(2+) as cofactor.

The protein localises to the cytoplasm. It carries out the reaction (7R,8S)-7,8-diammoniononanoate + CO2 + ATP = (4R,5S)-dethiobiotin + ADP + phosphate + 3 H(+). It participates in cofactor biosynthesis; biotin biosynthesis; biotin from 7,8-diaminononanoate: step 1/2. Its function is as follows. Catalyzes a mechanistically unusual reaction, the ATP-dependent insertion of CO2 between the N7 and N8 nitrogen atoms of 7,8-diaminopelargonic acid (DAPA, also called 7,8-diammoniononanoate) to form a ureido ring. This is ATP-dependent dethiobiotin synthetase BioD from Baumannia cicadellinicola subsp. Homalodisca coagulata.